Consider the following 1601-residue polypeptide: Ectopic P granules protein 5 (1601 aa).

Positions M1–L109 are disordered. Residues R15–D26 show a composition bias toward basic and acidic residues.

This sequence belongs to the EPG5 family.

It is found in the cytoplasm. Its function is as follows. Involved in autophagy. Has a role in the degradation of protein aggregates within autophagosomes. Essential for starvation-induced autotrophy and omegasome development. In Caenorhabditis briggsae, this protein is Ectopic P granules protein 5 (epg-5).